The primary structure comprises 413 residues: Arginine biosynthesis bifunctional protein ArgJ (413 aa).

Thr163, Lys189, Thr200, Glu286, Asn408, and Thr413 together coordinate substrate. Thr200 (nucleophile) is an active-site residue.

Belongs to the ArgJ family. As to quaternary structure, heterotetramer of two alpha and two beta chains.

Its subcellular location is the cytoplasm. The enzyme catalyses N(2)-acetyl-L-ornithine + L-glutamate = N-acetyl-L-glutamate + L-ornithine. It carries out the reaction L-glutamate + acetyl-CoA = N-acetyl-L-glutamate + CoA + H(+). It functions in the pathway amino-acid biosynthesis; L-arginine biosynthesis; L-ornithine and N-acetyl-L-glutamate from L-glutamate and N(2)-acetyl-L-ornithine (cyclic): step 1/1. It participates in amino-acid biosynthesis; L-arginine biosynthesis; N(2)-acetyl-L-ornithine from L-glutamate: step 1/4. Functionally, catalyzes two activities which are involved in the cyclic version of arginine biosynthesis: the synthesis of N-acetylglutamate from glutamate and acetyl-CoA as the acetyl donor, and of ornithine by transacetylation between N(2)-acetylornithine and glutamate. This Staphylococcus aureus (strain COL) protein is Arginine biosynthesis bifunctional protein ArgJ.